Consider the following 240-residue polypeptide: Purine nucleoside phosphorylase RP494 (240 aa).

The Zn(2+) site is built by His-60, Cys-96, and His-113.

This sequence belongs to the purine nucleoside phosphorylase YfiH/LACC1 family. Homodimer. Cu(2+) is required as a cofactor. It depends on Zn(2+) as a cofactor.

It catalyses the reaction adenosine + phosphate = alpha-D-ribose 1-phosphate + adenine. It carries out the reaction S-methyl-5'-thioadenosine + phosphate = 5-(methylsulfanyl)-alpha-D-ribose 1-phosphate + adenine. The catalysed reaction is inosine + phosphate = alpha-D-ribose 1-phosphate + hypoxanthine. The enzyme catalyses adenosine + H2O + H(+) = inosine + NH4(+). Functionally, purine nucleoside enzyme that catalyzes the phosphorolysis of adenosine and inosine nucleosides, yielding D-ribose 1-phosphate and the respective free bases, adenine and hypoxanthine. Also catalyzes the phosphorolysis of S-methyl-5'-thioadenosine into adenine and S-methyl-5-thio-alpha-D-ribose 1-phosphate. Also has adenosine deaminase activity. This chain is Purine nucleoside phosphorylase RP494, found in Rickettsia prowazekii (strain Madrid E).